Here is a 99-residue protein sequence, read N- to C-terminus: Apolipoprotein C-III (99 aa).

Positions 1–20 (MQPRTLLTVALLALLASARA) are cleaved as a signal peptide. Methionine sulfoxide is present on Met-63. A lipid-binding region spans residues 68–99 (RFLKGYWSKFTDKFTGFWDSNPEDQPTPAIES). O-linked (GalNAc...) threonine glycosylation occurs at Thr-94.

Belongs to the apolipoprotein C3 family. In terms of processing, the most abundant glycoforms are characterized by an O-linked disaccharide galactose linked to N-acetylgalactosamine (Gal-GalNAc), further modified with up to 3 sialic acid residues. Less abundant glycoforms are characterized by more complex and fucosylated glycan moieties. O-glycosylated on Thr-94 with a core 1 or possibly core 8 glycan.

It localises to the secreted. Component of triglyceride-rich very low density lipoproteins (VLDL) and high density lipoproteins (HDL) in plasma. Plays a multifaceted role in triglyceride homeostasis. Intracellularly, promotes hepatic very low density lipoprotein 1 (VLDL1) assembly and secretion; extracellularly, attenuates hydrolysis and clearance of triglyceride-rich lipoproteins (TRLs). Impairs the lipolysis of TRLs by inhibiting lipoprotein lipase and the hepatic uptake of TRLs by remnant receptors. Formed of several curved helices connected via semiflexible hinges, so that it can wrap tightly around the curved micelle surface and easily adapt to the different diameters of its natural binding partners. This Mus musculus (Mouse) protein is Apolipoprotein C-III (Apoc3).